The following is a 733-amino-acid chain: 1,4-alpha-glucan branching enzyme GlgB (733 aa).

The Nucleophile role is filled by D413. The Proton donor role is filled by E466.

Belongs to the glycosyl hydrolase 13 family. GlgB subfamily. As to quaternary structure, monomer.

The enzyme catalyses Transfers a segment of a (1-&gt;4)-alpha-D-glucan chain to a primary hydroxy group in a similar glucan chain.. It functions in the pathway glycan biosynthesis; glycogen biosynthesis. In terms of biological role, catalyzes the formation of the alpha-1,6-glucosidic linkages in glycogen by scission of a 1,4-alpha-linked oligosaccharide from growing alpha-1,4-glucan chains and the subsequent attachment of the oligosaccharide to the alpha-1,6 position. The chain is 1,4-alpha-glucan branching enzyme GlgB from Leifsonia xyli subsp. xyli (strain CTCB07).